The primary structure comprises 446 residues: Methionine aminopeptidase 2-1 (446 aa).

The segment at 1–88 (MAAQVTPELA…PPRVILSSIF (88 aa)) is disordered. Positions 32–44 (ENEDVESDDDNEG) are enriched in acidic residues. Basic residues predominate over residues 57 to 72 (AKKKKKKKPKKKKKGG). His196 is a substrate binding site. A divalent metal cation is bound by residues Asp216, Asp227, and His296. Residue His304 participates in substrate binding. A divalent metal cation-binding residues include Glu332 and Glu427.

The protein belongs to the peptidase M24A family. Methionine aminopeptidase eukaryotic type 2 subfamily. Co(2+) serves as cofactor. It depends on Zn(2+) as a cofactor. The cofactor is Mn(2+). Requires Fe(2+) as cofactor.

It is found in the cytoplasm. It carries out the reaction Release of N-terminal amino acids, preferentially methionine, from peptides and arylamides.. Its function is as follows. Cotranslationally removes the N-terminal methionine from nascent proteins. The N-terminal methionine is often cleaved when the second residue in the primary sequence is small and uncharged (Met-Ala-, Cys, Gly, Pro, Ser, Thr, or Val). This is Methionine aminopeptidase 2-1 from Blastomyces gilchristii (strain SLH14081) (Blastomyces dermatitidis).